The sequence spans 320 residues: Aldose reductase (320 aa).

Tyr-60 functions as the Proton donor in the catalytic mechanism. His-121 contacts substrate. 215–269 (SPLGSSEKNLAHDPVVEKVANKLNKTPGQVLIKWALQRGTSVIPKSSKDERIKEN) provides a ligand contact to NADP(+).

Belongs to the aldo/keto reductase family.

The enzyme catalyses an alditol + NAD(+) = an aldose + NADH + H(+). It carries out the reaction an alditol + NADP(+) = an aldose + NADPH + H(+). The sequence is that of Aldose reductase from Hordeum vulgare (Barley).